Reading from the N-terminus, the 552-residue chain is Glutamine--tRNA ligase (552 aa).

The 'HIGH' region motif lies at Pro34–His44. ATP is bound by residues Glu35–Asn37 and His41–Ser47. Residues Asp67 and Tyr212 each contribute to the L-glutamine site. Residues Thr231, Arg261 to Leu262, and Met269 to Lys271 each bind ATP. The 'KMSKS' region motif lies at Ile268 to Arg272.

It belongs to the class-I aminoacyl-tRNA synthetase family. Monomer.

The protein resides in the cytoplasm. It carries out the reaction tRNA(Gln) + L-glutamine + ATP = L-glutaminyl-tRNA(Gln) + AMP + diphosphate. This is Glutamine--tRNA ligase from Pectobacterium atrosepticum (strain SCRI 1043 / ATCC BAA-672) (Erwinia carotovora subsp. atroseptica).